We begin with the raw amino-acid sequence, 654 residues long: Pentatricopeptide repeat-containing protein At4g19191, mitochondrial (654 aa).

The transit peptide at 1-65 directs the protein to the mitochondrion; that stretch reads MSLIHRRLYR…PFVAKACARL (65 aa). PPR repeat units lie at residues 86-116, 117-151, 152-186, 187-217, 220-254, 255-289, 290-320, 321-355, 356-390, 392-422, 423-457, 458-488, and 494-524; these read DVFV…MPER, DATT…EITP, DSVT…GVDV, QVTV…IDRG, TVVS…EFKP, DLST…GTDQ, DIEA…MTSR, TCVS…GEKP, DLVT…GCKR, NVMI…TPEK, TVVT…DYKP, NHIT…MKQV, and GLDH…MSAK. The type E motif stretch occupies residues 529–604; sequence IWGALLNACK…YPGESVIQVN (76 aa). Residues 605–635 are type E(+) motif; sequence GKNHSFTVGEHGHVENEVIYFTLNGLSLFAK.

This sequence belongs to the PPR family. PCMP-E subfamily.

The protein localises to the mitochondrion. In Arabidopsis thaliana (Mouse-ear cress), this protein is Pentatricopeptide repeat-containing protein At4g19191, mitochondrial (PCMP-E1).